We begin with the raw amino-acid sequence, 349 residues long: Anthranilate phosphoribosyltransferase (349 aa).

Residues Gly-82, 85–86, 92–95, 110–118, and Ser-122 each bind 5-phospho-alpha-D-ribose 1-diphosphate; these read GD, NVST, and KHGNRAVSG. An anthranilate-binding site is contributed by Gly-82. Ser-94 lines the Mg(2+) pocket. Asn-113 contacts anthranilate. An anthranilate-binding site is contributed by Arg-168. Positions 227 and 228 each coordinate Mg(2+).

The protein belongs to the anthranilate phosphoribosyltransferase family. As to quaternary structure, homodimer. Mg(2+) is required as a cofactor.

It carries out the reaction N-(5-phospho-beta-D-ribosyl)anthranilate + diphosphate = 5-phospho-alpha-D-ribose 1-diphosphate + anthranilate. The protein operates within amino-acid biosynthesis; L-tryptophan biosynthesis; L-tryptophan from chorismate: step 2/5. Catalyzes the transfer of the phosphoribosyl group of 5-phosphorylribose-1-pyrophosphate (PRPP) to anthranilate to yield N-(5'-phosphoribosyl)-anthranilate (PRA). The chain is Anthranilate phosphoribosyltransferase from Pseudomonas syringae pv. tomato (strain ATCC BAA-871 / DC3000).